A 553-amino-acid polypeptide reads, in one-letter code: RNA N(6)-adenosine-methyltransferase METTL16 (553 aa).

Positions 17-20 (PPDF) are RNA-binding. S-adenosyl-L-methionine contacts are provided by Arg-82, Gly-110, Ser-114, Glu-133, Thr-164, and Asn-184. Residues 163–167 (KTLLM) are K-loop. 3 RNA-binding regions span residues 199–211 (SRNS…SSVN), 250–254 (GKKCS), and 277–283 (QGRTMRW). The VCR 1 stretch occupies residues 289–400 (FYDDVTVPSP…QLREVPRAPE (112 aa)). Phosphoserine occurs at positions 329, 425, and 429. The disordered stretch occupies residues 457 to 496 (EETPEATEDERDEERGGMEAMESCKGSSNGAQDGEASEKG). The segment covering 458-468 (ETPEATEDERD) has biased composition (acidic residues). Thr-463 carries the phosphothreonine modification. Positions 506-553 (YLFKCLVNIKKEAGDAVVEMHWVEGQNRDLMNQLCTYVRNQILRLVAS) are VCR 2.

The protein belongs to the methyltransferase superfamily. METTL16/RlmF family. In terms of assembly, interacts with MEPCE. Interacts with LARP7.

The protein localises to the nucleus. Its subcellular location is the cytoplasm. The catalysed reaction is adenosine in U6 snRNA + S-adenosyl-L-methionine = N(6)-methyladenosine in U6 snRNA + S-adenosyl-L-homocysteine + H(+). It catalyses the reaction an adenosine in mRNA + S-adenosyl-L-methionine = an N(6)-methyladenosine in mRNA + S-adenosyl-L-homocysteine + H(+). Its activity is regulated as follows. Methyltransferase activity is autoinhibited by the K-loop region that blocks S-adenosyl-L-methionine-binding. Upon activation, K-loop changes conformation, allowing S-adenosyl-L-methionine-binding and subsequent methyltransferase activity. mRNA N6-adenosine-methyltransferase activity is inhibited by zinc. Functionally, RNA N6-methyltransferase that methylates adenosine residues at the N(6) position of a subset of RNAs and is involved in S-adenosyl-L-methionine homeostasis by regulating expression of MAT2A transcripts. Able to N6-methylate a subset of mRNAs and U6 small nuclear RNAs (U6 snRNAs). In contrast to the METTL3-METTL14 heterodimer, only able to methylate a limited number of RNAs: requires both a 5'UACAGAGAA-3' nonamer sequence and a specific RNA structure. Plays a key role in S-adenosyl-L-methionine homeostasis by mediating N6-methylation of MAT2A mRNAs, altering splicing of MAT2A transcripts: in presence of S-adenosyl-L-methionine, binds the 3'-UTR region of MAT2A mRNA and specifically N6-methylates the first hairpin of MAT2A mRNA, preventing recognition of their 3'-splice site by U2AF1/U2AF35, thereby inhibiting splicing and protein production of S-adenosylmethionine synthase. In S-adenosyl-L-methionine-limiting conditions, binds the 3'-UTR region of MAT2A mRNA but stalls due to the lack of a methyl donor, preventing N6-methylation and promoting expression of MAT2A. In addition to mRNAs, also able to mediate N6-methylation of U6 small nuclear RNA (U6 snRNA): specifically N6-methylates adenine in position 43 of U6 snRNAs. Also able to bind various lncRNAs, such as 7SK snRNA (7SK RNA) or 7SL RNA. Specifically binds the 3'-end of the MALAT1 long non-coding RNA. The protein is RNA N(6)-adenosine-methyltransferase METTL16 of Mus musculus (Mouse).